We begin with the raw amino-acid sequence, 285 residues long: Energy-coupling factor transporter ATP-binding protein EcfA1 (285 aa).

One can recognise an ABC transporter domain in the interval 9-246 (VTVEHLSFTY…VSLIKNAGLD (238 aa)). 43-50 (GHNGSGKS) provides a ligand contact to ATP.

It belongs to the ABC transporter superfamily. Energy-coupling factor EcfA family. As to quaternary structure, forms a stable energy-coupling factor (ECF) transporter complex composed of 2 membrane-embedded substrate-binding proteins (S component), 2 ATP-binding proteins (A component) and 2 transmembrane proteins (T component).

The protein localises to the cell membrane. In terms of biological role, ATP-binding (A) component of a common energy-coupling factor (ECF) ABC-transporter complex. Unlike classic ABC transporters this ECF transporter provides the energy necessary to transport a number of different substrates. The chain is Energy-coupling factor transporter ATP-binding protein EcfA1 from Lactobacillus gasseri (strain ATCC 33323 / DSM 20243 / BCRC 14619 / CIP 102991 / JCM 1131 / KCTC 3163 / NCIMB 11718 / NCTC 13722 / AM63).